Consider the following 125-residue polypeptide: Large ribosomal subunit protein bL12 (125 aa).

This sequence belongs to the bacterial ribosomal protein bL12 family. Homodimer. Part of the ribosomal stalk of the 50S ribosomal subunit. Forms a multimeric L10(L12)X complex, where L10 forms an elongated spine to which 2 to 4 L12 dimers bind in a sequential fashion. Binds GTP-bound translation factors.

In terms of biological role, forms part of the ribosomal stalk which helps the ribosome interact with GTP-bound translation factors. Is thus essential for accurate translation. The polypeptide is Large ribosomal subunit protein bL12 (Campylobacter jejuni subsp. jejuni serotype O:6 (strain 81116 / NCTC 11828)).